Reading from the N-terminus, the 366-residue chain is 1-deoxy-D-xylulose 5-phosphate reductoisomerase (366 aa).

NADPH-binding residues include Thr-7, Gly-8, Ser-9, Ile-10, Gly-31, Asn-33, and Asn-111. Lys-112 contributes to the 1-deoxy-D-xylulose 5-phosphate binding site. Glu-113 contributes to the NADPH binding site. Mn(2+) is bound at residue Asp-131. Residues Ser-132, Glu-133, Ser-162, and His-185 each contribute to the 1-deoxy-D-xylulose 5-phosphate site. Residue Glu-133 coordinates Mn(2+). Position 191 (Gly-191) interacts with NADPH. 1-deoxy-D-xylulose 5-phosphate contacts are provided by Ser-198, Asn-203, Lys-204, and Glu-207. Position 207 (Glu-207) interacts with Mn(2+).

Belongs to the DXR family. Mg(2+) is required as a cofactor. Requires Mn(2+) as cofactor.

It carries out the reaction 2-C-methyl-D-erythritol 4-phosphate + NADP(+) = 1-deoxy-D-xylulose 5-phosphate + NADPH + H(+). Its pathway is isoprenoid biosynthesis; isopentenyl diphosphate biosynthesis via DXP pathway; isopentenyl diphosphate from 1-deoxy-D-xylulose 5-phosphate: step 1/6. In terms of biological role, catalyzes the NADPH-dependent rearrangement and reduction of 1-deoxy-D-xylulose-5-phosphate (DXP) to 2-C-methyl-D-erythritol 4-phosphate (MEP). The polypeptide is 1-deoxy-D-xylulose 5-phosphate reductoisomerase (Nautilia profundicola (strain ATCC BAA-1463 / DSM 18972 / AmH)).